A 155-amino-acid chain; its full sequence is Ribosomal RNA large subunit methyltransferase H (155 aa).

Residues Leu-73, Gly-104, and 123 to 128 (LSPLTL) contribute to the S-adenosyl-L-methionine site.

It belongs to the RNA methyltransferase RlmH family. As to quaternary structure, homodimer.

The protein resides in the cytoplasm. The catalysed reaction is pseudouridine(1915) in 23S rRNA + S-adenosyl-L-methionine = N(3)-methylpseudouridine(1915) in 23S rRNA + S-adenosyl-L-homocysteine + H(+). Functionally, specifically methylates the pseudouridine at position 1915 (m3Psi1915) in 23S rRNA. The sequence is that of Ribosomal RNA large subunit methyltransferase H from Pseudomonas putida (strain W619).